The following is a 584-amino-acid chain: Protein DENND6A (584 aa).

A disordered region spans residues 1 to 23 (MALWERGAGGAAEAGEDATEEPE). Residues 39–218 (HCVCVVGFDL…KLRIPTYRDK (180 aa)) form the uDENN domain. In terms of domain architecture, cDENN spans 244–369 (EVDLFRCFCP…VKVKKLKNLK (126 aa)). In terms of domain architecture, dDENN spans 371–504 (LDSKPGVYTS…RSRQKEMTQN (134 aa)).

This sequence belongs to the DENND6 family.

It localises to the recycling endosome. The protein resides in the cytoplasm. Guanine nucleotide exchange factor (GEF) for RAB14. The sequence is that of Protein DENND6A (DENND6A) from Gallus gallus (Chicken).